We begin with the raw amino-acid sequence, 319 residues long: Ciliary microtubule inner protein 2A (319 aa).

It belongs to the CIMIP2 family. As to quaternary structure, microtubule inner protein component of sperm flagellar doublet microtubules.

Its subcellular location is the cytoplasm. It localises to the cytoskeleton. It is found in the flagellum axoneme. Functionally, microtubule inner protein (MIP) part of the dynein-decorated doublet microtubules (DMTs) in flagellum axoneme. Binds to the intra-tubulin interfaces. In Mus musculus (Mouse), this protein is Ciliary microtubule inner protein 2A (Cimip2a).